Consider the following 227-residue polypeptide: 2-C-methyl-D-erythritol 4-phosphate cytidylyltransferase (227 aa).

This sequence belongs to the IspD/TarI cytidylyltransferase family. IspD subfamily.

It catalyses the reaction 2-C-methyl-D-erythritol 4-phosphate + CTP + H(+) = 4-CDP-2-C-methyl-D-erythritol + diphosphate. The protein operates within isoprenoid biosynthesis; isopentenyl diphosphate biosynthesis via DXP pathway; isopentenyl diphosphate from 1-deoxy-D-xylulose 5-phosphate: step 2/6. Catalyzes the formation of 4-diphosphocytidyl-2-C-methyl-D-erythritol from CTP and 2-C-methyl-D-erythritol 4-phosphate (MEP). The polypeptide is 2-C-methyl-D-erythritol 4-phosphate cytidylyltransferase (Tolumonas auensis (strain DSM 9187 / NBRC 110442 / TA 4)).